Here is a 424-residue protein sequence, read N- to C-terminus: MIDPKLLRTDPDAVRRSQAARGEDSSVVDDVVAADEARREAIAAHENLRAEQKGLGKRIAKASGDEKAELLSRTKTISGEVADLKKAADEADAKFTELAKTLGNIVIDGVPAGGEDEGVIKETVGTPRDFAAEGFEPKDHLEIGEALGAIDMERGTKISGSRFYVLTGVGAQLEFALLNLAMSKAAQWGFTPMIPPALVKPSAMEGTGFLGQAADDVYYLPKDDQYLVGTSEVALAAFHSDEILDDAELPKRYVAFSPCYRREAGSYGKDTRGIFRVHWFDKVEMFVYCLPQEAEAWHEKLLSFEKDFITALQIPFQVLDVASGDLGLSAARKFDCYGWLPTQNRYREITSTSNCTTFQARRLSIRHRGPDGVEPLATLNGTLCAMTRIIIMLLENHQQADGSVRIPEALRPYLGGREFIEPVK.

Positions 1–15 (MIDPKLLRTDPDAVR) are enriched in basic and acidic residues. Residues 1-27 (MIDPKLLRTDPDAVRRSQAARGEDSSV) are disordered. 230 to 232 (TSE) lines the L-serine pocket. ATP-binding positions include 261 to 263 (RRE) and Val277. Glu284 lines the L-serine pocket. 348–351 (EITS) contributes to the ATP binding site. Thr382 provides a ligand contact to L-serine.

This sequence belongs to the class-II aminoacyl-tRNA synthetase family. Type-1 seryl-tRNA synthetase subfamily. In terms of assembly, homodimer. The tRNA molecule binds across the dimer.

It is found in the cytoplasm. It carries out the reaction tRNA(Ser) + L-serine + ATP = L-seryl-tRNA(Ser) + AMP + diphosphate + H(+). The catalysed reaction is tRNA(Sec) + L-serine + ATP = L-seryl-tRNA(Sec) + AMP + diphosphate + H(+). It functions in the pathway aminoacyl-tRNA biosynthesis; selenocysteinyl-tRNA(Sec) biosynthesis; L-seryl-tRNA(Sec) from L-serine and tRNA(Sec): step 1/1. Functionally, catalyzes the attachment of serine to tRNA(Ser). Is also able to aminoacylate tRNA(Sec) with serine, to form the misacylated tRNA L-seryl-tRNA(Sec), which will be further converted into selenocysteinyl-tRNA(Sec). The sequence is that of Serine--tRNA ligase from Cutibacterium acnes (strain DSM 16379 / KPA171202) (Propionibacterium acnes).